The sequence spans 367 residues: Mating-type protein ALPHA2 (367 aa).

The homeobox; TALE-type DNA-binding region spans 273-338; it reads GADAIDSEKL…NKRRTGAKKR (66 aa).

This sequence belongs to the TALE/M-ATYP homeobox family. Forms a heterodimer with A1.

Its subcellular location is the nucleus. Its function is as follows. Mating type proteins are sequence specific DNA-binding proteins that act as master switches in yeast differentiation by controlling gene expression in a cell type-specific fashion. Transcriptional corepressor that acts in conjunction with A1 to repress transcription of haploid-specific genes. The chain is Mating-type protein ALPHA2 (MATB2) from Yarrowia lipolytica (strain CLIB 122 / E 150) (Yeast).